A 552-amino-acid chain; its full sequence is TBCC domain-containing protein 1 (552 aa).

In terms of domain architecture, C-CAP/cofactor C-like spans 304–435; that stretch reads PRLHRIVVMS…LEDHMARTGL (132 aa).

This sequence belongs to the TBCC family. As to expression, expressed in brain and testis (at protein level).

It is found in the cytoplasm. It localises to the cytoskeleton. The protein resides in the microtubule organizing center. The protein localises to the centrosome. Its subcellular location is the spindle pole. Its function is as follows. Plays a role in the regulation of centrosome and Golgi apparatus positioning, with consequences on cell shape and cell migration. The protein is TBCC domain-containing protein 1 (Tbccd1) of Mus musculus (Mouse).